Reading from the N-terminus, the 558-residue chain is 2-isopropylmalate synthase (558 aa).

A Pyruvate carboxyltransferase domain is found at 30–303 (PIWCSVDLRD…DPGIDCSDIN (274 aa)). Mg(2+) is bound by residues aspartate 39, histidine 242, histidine 244, and asparagine 278. Residues 437–558 (QPGARLKFLD…ANRIVGRKAR (122 aa)) are regulatory domain.

This sequence belongs to the alpha-IPM synthase/homocitrate synthase family. LeuA type 2 subfamily. In terms of assembly, homodimer. Requires Mg(2+) as cofactor.

Its subcellular location is the cytoplasm. The enzyme catalyses 3-methyl-2-oxobutanoate + acetyl-CoA + H2O = (2S)-2-isopropylmalate + CoA + H(+). It participates in amino-acid biosynthesis; L-leucine biosynthesis; L-leucine from 3-methyl-2-oxobutanoate: step 1/4. Catalyzes the condensation of the acetyl group of acetyl-CoA with 3-methyl-2-oxobutanoate (2-ketoisovalerate) to form 3-carboxy-3-hydroxy-4-methylpentanoate (2-isopropylmalate). This chain is 2-isopropylmalate synthase, found in Mesorhizobium japonicum (strain LMG 29417 / CECT 9101 / MAFF 303099) (Mesorhizobium loti (strain MAFF 303099)).